Here is a 275-residue protein sequence, read N- to C-terminus: Cis-2,3-dihydrobiphenyl-2,3-diol dehydrogenase (275 aa).

9–33 provides a ligand contact to NAD(+); sequence LITGGASGLGRALVDRFVAEAKVAV. Position 140 (Ser-140) interacts with substrate. Catalysis depends on Tyr-153, which acts as the Proton acceptor.

Belongs to the short-chain dehydrogenases/reductases (SDR) family.

The enzyme catalyses (2R,3S)-3-phenylcyclohexa-3,5-diene-1,2-diol + NAD(+) = biphenyl-2,3-diol + NADH + H(+). Its pathway is xenobiotic degradation; biphenyl degradation; 2-hydroxy-2,4-pentadienoate and benzoate from biphenyl: step 2/4. The sequence is that of Cis-2,3-dihydrobiphenyl-2,3-diol dehydrogenase (bphB) from Metapseudomonas furukawaii (Pseudomonas furukawaii).